The primary structure comprises 360 residues: GTP 3',8-cyclase 2 (360 aa).

One can recognise a Radical SAM core domain in the interval 33 to 259 (TFGRVANDLR…PDPAPRGSAP (227 aa)). Arg42 contacts GTP. [4Fe-4S] cluster is bound by residues Cys49 and Cys53. Tyr55 is an S-adenosyl-L-methionine binding site. Cys56 is a binding site for [4Fe-4S] cluster. Arg93 serves as a coordination point for GTP. Residue Gly97 coordinates S-adenosyl-L-methionine. Residue Thr124 participates in GTP binding. Residue Ser148 participates in S-adenosyl-L-methionine binding. Position 185 (Lys185) interacts with GTP. S-adenosyl-L-methionine is bound at residue Met219. The [4Fe-4S] cluster site is built by Cys287 and Cys290. Residue 292 to 294 (RTR) coordinates GTP. Cys304 provides a ligand contact to [4Fe-4S] cluster.

This sequence belongs to the radical SAM superfamily. MoaA family. In terms of assembly, monomer and homodimer. It depends on [4Fe-4S] cluster as a cofactor.

It catalyses the reaction GTP + AH2 + S-adenosyl-L-methionine = (8S)-3',8-cyclo-7,8-dihydroguanosine 5'-triphosphate + 5'-deoxyadenosine + L-methionine + A + H(+). It participates in cofactor biosynthesis; molybdopterin biosynthesis. Its function is as follows. Catalyzes the cyclization of GTP to (8S)-3',8-cyclo-7,8-dihydroguanosine 5'-triphosphate. The chain is GTP 3',8-cyclase 2 from Mycobacterium bovis (strain ATCC BAA-935 / AF2122/97).